The primary structure comprises 572 residues: Light-independent protochlorophyllide reductase subunit N (572 aa).

Residues Cys-106, Cys-131, and Cys-191 each coordinate [4Fe-4S] cluster. The tract at residues 249–268 (SLDSMKLPSGGREKQINDVN) is disordered.

This sequence belongs to the BchN/ChlN family. In terms of assembly, protochlorophyllide reductase is composed of three subunits; ChlL, ChlN and ChlB. Forms a heterotetramer of two ChlB and two ChlN subunits. [4Fe-4S] cluster is required as a cofactor.

It localises to the plastid. The protein resides in the chloroplast. The enzyme catalyses chlorophyllide a + oxidized 2[4Fe-4S]-[ferredoxin] + 2 ADP + 2 phosphate = protochlorophyllide a + reduced 2[4Fe-4S]-[ferredoxin] + 2 ATP + 2 H2O. Its pathway is porphyrin-containing compound metabolism; chlorophyll biosynthesis (light-independent). Component of the dark-operative protochlorophyllide reductase (DPOR) that uses Mg-ATP and reduced ferredoxin to reduce ring D of protochlorophyllide (Pchlide) to form chlorophyllide a (Chlide). This reaction is light-independent. The NB-protein (ChlN-ChlB) is the catalytic component of the complex. The sequence is that of Light-independent protochlorophyllide reductase subunit N from Oltmannsiellopsis viridis (Marine flagellate).